Here is a 364-residue protein sequence, read N- to C-terminus: Spermidine/putrescine import ATP-binding protein PotA (364 aa).

Positions 6 to 236 constitute an ABC transporter domain; sequence IEIRQIYKSY…PANLHVAMFI (231 aa). An ATP-binding site is contributed by 38-45; sequence GPSGCGKT.

Belongs to the ABC transporter superfamily. Spermidine/putrescine importer (TC 3.A.1.11.1) family. The complex is composed of two ATP-binding proteins (PotA), two transmembrane proteins (PotB and PotC) and a solute-binding protein (PotD).

The protein localises to the cell inner membrane. It carries out the reaction ATP + H2O + polyamine-[polyamine-binding protein]Side 1 = ADP + phosphate + polyamineSide 2 + [polyamine-binding protein]Side 1.. Its function is as follows. Part of the ABC transporter complex PotABCD involved in spermidine/putrescine import. Responsible for energy coupling to the transport system. This Legionella pneumophila subsp. pneumophila (strain Philadelphia 1 / ATCC 33152 / DSM 7513) protein is Spermidine/putrescine import ATP-binding protein PotA.